The following is a 274-amino-acid chain: Orotidine 5'-phosphate decarboxylase (274 aa).

Lys96 serves as the catalytic Proton donor.

It belongs to the OMP decarboxylase family. Type 2 subfamily.

The enzyme catalyses orotidine 5'-phosphate + H(+) = UMP + CO2. It participates in pyrimidine metabolism; UMP biosynthesis via de novo pathway; UMP from orotate: step 2/2. The protein is Orotidine 5'-phosphate decarboxylase of Bacteroides fragilis (strain YCH46).